The following is a 312-amino-acid chain: Carbamate kinase 2 (312 aa).

It belongs to the carbamate kinase family.

Its subcellular location is the cytoplasm. It catalyses the reaction hydrogencarbonate + NH4(+) + ATP = carbamoyl phosphate + ADP + H2O + H(+). It participates in metabolic intermediate metabolism; carbamoyl phosphate degradation; CO(2) and NH(3) from carbamoyl phosphate: step 1/1. The polypeptide is Carbamate kinase 2 (arcC2) (Enterococcus faecalis (strain ATCC 700802 / V583)).